Consider the following 477-residue polypeptide: Serine/threonine-protein kinase prp4 (477 aa).

The disordered stretch occupies residues 25–123 (KYQQTGNGHS…SPSVKRQNTG (99 aa)). Basic and acidic residues predominate over residues 38 to 47 (IPEKKLKEDV). Positions 74-86 (EGSNSNTKLDVTN) are enriched in polar residues. Residues 87–98 (STTSDSPSIKSS) show a composition bias toward low complexity. Ser92 is modified (phosphoserine). The span at 113–123 (PSPSVKRQNTG) shows a compositional bias: polar residues. Positions 159 to 477 (YIVQSNLGKG…ALKHPFFIKK (319 aa)) constitute a Protein kinase domain. ATP is bound by residues 165–173 (LGKGMFSTV) and Lys188. The Proton acceptor role is filled by Asp286. Tyr320 is subject to Phosphotyrosine.

This sequence belongs to the protein kinase superfamily. CMGC Ser/Thr protein kinase family.

The catalysed reaction is L-seryl-[protein] + ATP = O-phospho-L-seryl-[protein] + ADP + H(+). It carries out the reaction L-threonyl-[protein] + ATP = O-phospho-L-threonyl-[protein] + ADP + H(+). Functionally, has a role in pre-mRNA splicing and is essential for growth. Phosphorylates srp1. The protein is Serine/threonine-protein kinase prp4 (prp4) of Schizosaccharomyces pombe (strain 972 / ATCC 24843) (Fission yeast).